The following is a 211-amino-acid chain: ATP-dependent Clp protease proteolytic subunit (211 aa).

Catalysis depends on Ser106, which acts as the Nucleophile. The active site involves His131.

This sequence belongs to the peptidase S14 family. As to quaternary structure, fourteen ClpP subunits assemble into 2 heptameric rings which stack back to back to give a disk-like structure with a central cavity, resembling the structure of eukaryotic proteasomes.

It is found in the cytoplasm. It catalyses the reaction Hydrolysis of proteins to small peptides in the presence of ATP and magnesium. alpha-casein is the usual test substrate. In the absence of ATP, only oligopeptides shorter than five residues are hydrolyzed (such as succinyl-Leu-Tyr-|-NHMec, and Leu-Tyr-Leu-|-Tyr-Trp, in which cleavage of the -Tyr-|-Leu- and -Tyr-|-Trp bonds also occurs).. Cleaves peptides in various proteins in a process that requires ATP hydrolysis. Has a chymotrypsin-like activity. Plays a major role in the degradation of misfolded proteins. This Nitrobacter hamburgensis (strain DSM 10229 / NCIMB 13809 / X14) protein is ATP-dependent Clp protease proteolytic subunit.